A 350-amino-acid polypeptide reads, in one-letter code: Transcription factor MYB102 (350 aa).

HTH myb-type domains are found at residues 9–65 and 66–116; these read KNGL…RPDI and KRGR…RKKL. 2 DNA-binding regions (H-T-H motif) span residues 37–61 and 89–112; these read WRTL…TNYL and WSAI…NTHI.

As to expression, expressed in rosette leaves, cauline leaves and flowers.

Its subcellular location is the nucleus. Its function is as follows. Probable transcription factor that may function in osmotic stress and wounding signaling pathways. Contributes to basal resistance against the herbivore Pieris rapae (white cabbage butterfly) feeding. The protein is Transcription factor MYB102 of Arabidopsis thaliana (Mouse-ear cress).